Reading from the N-terminus, the 119-residue chain is Large ribosomal subunit protein bL20 (119 aa).

It belongs to the bacterial ribosomal protein bL20 family.

Binds directly to 23S ribosomal RNA and is necessary for the in vitro assembly process of the 50S ribosomal subunit. It is not involved in the protein synthesizing functions of that subunit. This chain is Large ribosomal subunit protein bL20, found in Rhodopseudomonas palustris (strain HaA2).